Here is a 78-residue protein sequence, read N- to C-terminus: MSRVCQVTGKRVQTGNNVSHANNKTRRRFLPNLHKRRFWVASENRWVKLRVSTCAVRTIDKNGIDAVLAELRASGEKV.

The protein belongs to the bacterial ribosomal protein bL28 family.

The protein is Large ribosomal subunit protein bL28 (rpmB) of Xylella fastidiosa (strain 9a5c).